We begin with the raw amino-acid sequence, 243 residues long: Tyrosine recombinase XerD-like (243 aa).

The 72-residue stretch at 1–72 folds into the Core-binding (CB) domain; the sequence is MKQAIESFIQ…AVNQFLYFLY (72 aa). The Tyr recombinase domain maps to 91 to 243; the sequence is SVKKKLERED…KTSMSLEKFR (153 aa). Active-site residues include Lys149 and Arg210.

It belongs to the 'phage' integrase family. XerD-like subfamily.

It is found in the cytoplasm. Putative tyrosine recombinase. Not involved in the cutting and rejoining of the recombining DNA molecules on dif(SL) site. In Streptococcus suis (strain 98HAH33), this protein is Tyrosine recombinase XerD-like.